Here is a 1871-residue protein sequence, read N- to C-terminus: Girdin (1871 aa).

In terms of domain architecture, Calponin-homology (CH) spans 12-132 (QFMTSPLVTW…KLLLLLLGCA (121 aa)). The stretch at 196 to 425 (HLKRLIDERD…EMAQKQSMDE (230 aa)) forms a coiled coil. S233, S237, and S449 each carry phosphoserine. Residues 458–1385 (TSSRLLKLEM…KIMDQYKFYD (928 aa)) are a coiled coil. Disordered regions lie at residues 816 to 842 (ENKS…KRLR) and 1010 to 1035 (RQDE…RESQ). S1020 carries the post-translational modification Phosphoserine. The segment covering 1026 to 1035 (EDNKWERESQ) has biased composition (basic and acidic residues). Phosphoserine is present on S1387. The tract at residues 1390-1408 (RRRGNWITLKMRKLIKSKK) is phosphoinositide-binding. The span at 1407 to 1416 (KKDINRERQK) shows a compositional bias: basic and acidic residues. Disordered stretches follow at residues 1407 to 1459 (KKDI…LGTK) and 1559 to 1601 (TTSF…SNNN). S1417 is modified (phosphoserine; by PKB/AKT1). 3 stretches are compositionally biased toward polar residues: residues 1417–1430 (SLTL…SSEG), 1445–1459 (VGSN…LGTK), and 1559–1578 (TTSF…STGS). T1421 is modified (phosphothreonine). The short motif at 1672–1702 (KTGSPGSEVVTLQQFLEESNKLTSVQIKSSS) is the GBA element. Residue T1673 is modified to Phosphothreonine. S1675 is subject to Phosphoserine. The residue at position 1690 (S1690) is a Phosphoserine; by PKC/PRKCQ. Positions 1713–1823 (SLSVSSDFLG…GTTRRTSIHD (111 aa)) are SH2-like; required for interaction with growth factor receptors. S1717 bears the Phosphoserine mark. The segment at 1736–1871 (SGKTPGDFYD…KSRSREQQSS (136 aa)) is disordered. The span at 1743–1763 (FYDRRTTKPEFLRPGPRKTED) shows a compositional bias: basic and acidic residues. Y1765 and Y1799 each carry phosphotyrosine. 2 stretches are compositionally biased toward polar residues: residues 1787–1799 (SSLS…SNPY) and 1807–1818 (SVISTAEGTTRR). A phosphoserine mark is found at S1820 and S1837. Basic and acidic residues predominate over residues 1820-1830 (SIHDFLTKDSR). A compositionally biased stretch (low complexity) spans 1838-1851 (PPAAADSNTTAASN). Positions 1854–1871 (KVQESRNSKSRSREQQSS) are enriched in basic and acidic residues.

Belongs to the CCDC88 family. In terms of assembly, homodimer. Interacts (via GBA motif) with guanine nucleotide-binding protein G(i) alpha subunits GNAI1, GNAI2 and GNAI3. Also interacts (via GNA motif) with guanine nucleotide-binding protein G(s) alpha subunit GNAS. Interaction with G(i) alpha subunits occurs before interaction with GNAS and is regulated by phosphorylation; phosphorylation at Ser-1675 enhances binding to G(i) alpha subunits while phosphorylation at Ser-1690 abolishes G(i) alpha subunit binding, promoting binding to GNAS. Interacts (via C-terminal SH2-like region) with growth factor receptors EGFR, INSR and KDR/VEGFR2 (via their autophosphorylated cytoplasmic tails). Forms a complex with EGFR and GNAI3 which leads to enhanced EGFR signaling and triggering of cell migration; ligand stimulation is required for recruitment of GNAI3 to the complex. Interacts (tyrosine-phosphorylated form) with phosphatidylinositol 3-kinase (PI3K) regulatory subunit PIK3R1/p85a (via SH2 domains); the interaction enables recruitment of PIK3R1 to the EGFR receptor, enhancing PI3K activity and cell migration. Interacts with serine/threonine-protein kinase PRKCQ; the interaction leads to phosphorylation of CCDC88A and inhibition of its guanine nucleotide exchange factor activity. Interacts (via C-terminus) with DISC1; the interaction is direct. Interacts with AKT proteins; the interaction is inhibited in the presence of DISC1. Interacts with AKT1/PKB (via C-terminus). The non-phosphorylated form interacts with phosphatidylinositol 4-phosphate [PI(4)P] and weakly with phosphatidylinositol 3-phosphate [PI(3)P]. Interacts with microtubules. Interacts with actin. Post-translationally, phosphorylation is induced by epidermal growth factor (EGF) in a phosphoinositide 3-kinase (PI3K)-dependent manner. Phosphorylation by AKT1/PKB is necessary for delocalization from the cell membrane and for cell migration. Phosphorylated on tyrosine residues which promotes binding to phosphatidylinositol 3-kinase (PI3K) regulatory subunit PIK3R1/p85a and enhances PI3K activity. Tyrosine-phosphorylated by both receptor and non-receptor tyrosine kinases in vitro. Tyrosine phosphorylation is required for AKT1-dependent phosphorylation of Ser-1417. Phosphorylation at Ser-1690 by PRKCQ disrupts interaction with GNAI3 and inhibits guanine nucleotide exchange factor activity. Expressed ubiquitously.

It is found in the cell membrane. It localises to the cytoplasm. The protein resides in the cytosol. The protein localises to the cytoplasmic vesicle. Its subcellular location is the cell projection. It is found in the lamellipodium. It localises to the cytoskeleton. The protein resides in the cilium basal body. The protein localises to the microtubule organizing center. Its subcellular location is the centrosome. It is found in the centriole. Its function is as follows. Bifunctional modulator of guanine nucleotide-binding proteins (G proteins). Acts as a non-receptor guanine nucleotide exchange factor which binds to and activates guanine nucleotide-binding protein G(i) alpha subunits. Also acts as a guanine nucleotide dissociation inhibitor for guanine nucleotide-binding protein G(s) subunit alpha GNAS. Essential for cell migration. Interacts in complex with G(i) alpha subunits with the EGFR receptor, retaining EGFR at the cell membrane following ligand stimulation and promoting EGFR signaling which triggers cell migration. Binding to Gi-alpha subunits displaces the beta and gamma subunits from the heterotrimeric G-protein complex which enhances phosphoinositide 3-kinase (PI3K)-dependent phosphorylation and kinase activity of AKT1/PKB. Phosphorylation of AKT1/PKB induces the phosphorylation of downstream effectors GSK3 and FOXO1/FKHR, and regulates DNA replication and cell proliferation. Binds in its tyrosine-phosphorylated form to the phosphatidylinositol 3-kinase (PI3K) regulatory subunit PIK3R1 which enables recruitment of PIK3R1 to the EGFR receptor, enhancing PI3K activity and cell migration. Plays a role as a key modulator of the AKT-mTOR signaling pathway, controlling the tempo of the process of newborn neuron integration during adult neurogenesis, including correct neuron positioning, dendritic development and synapse formation. Inhibition of G(s) subunit alpha GNAS leads to reduced cellular levels of cAMP and suppression of cell proliferation. Essential for the integrity of the actin cytoskeleton. Required for formation of actin stress fibers and lamellipodia. May be involved in membrane sorting in the early endosome. Plays a role in ciliogenesis and cilium morphology and positioning and this may partly be through regulation of the localization of scaffolding protein CROCC/Rootletin. This Homo sapiens (Human) protein is Girdin (CCDC88A).